The chain runs to 194 residues: Holliday junction branch migration complex subunit RuvA (194 aa).

The domain I stretch occupies residues methionine 1–alanine 64. The segment at threonine 65 to alanine 143 is domain II. The interval alanine 144–alanine 147 is flexible linker. The tract at residues alanine 147 to lysine 194 is domain III.

This sequence belongs to the RuvA family. As to quaternary structure, homotetramer. Forms an RuvA(8)-RuvB(12)-Holliday junction (HJ) complex. HJ DNA is sandwiched between 2 RuvA tetramers; dsDNA enters through RuvA and exits via RuvB. An RuvB hexamer assembles on each DNA strand where it exits the tetramer. Each RuvB hexamer is contacted by two RuvA subunits (via domain III) on 2 adjacent RuvB subunits; this complex drives branch migration. In the full resolvosome a probable DNA-RuvA(4)-RuvB(12)-RuvC(2) complex forms which resolves the HJ.

The protein resides in the cytoplasm. Its function is as follows. The RuvA-RuvB-RuvC complex processes Holliday junction (HJ) DNA during genetic recombination and DNA repair, while the RuvA-RuvB complex plays an important role in the rescue of blocked DNA replication forks via replication fork reversal (RFR). RuvA specifically binds to HJ cruciform DNA, conferring on it an open structure. The RuvB hexamer acts as an ATP-dependent pump, pulling dsDNA into and through the RuvAB complex. HJ branch migration allows RuvC to scan DNA until it finds its consensus sequence, where it cleaves and resolves the cruciform DNA. The protein is Holliday junction branch migration complex subunit RuvA of Neisseria meningitidis serogroup B (strain ATCC BAA-335 / MC58).